Reading from the N-terminus, the 967-residue chain is Mediator of RNA polymerase II transcription subunit 14 (967 aa).

This sequence belongs to the Mediator complex subunit 14 family. As to quaternary structure, component of the Mediator complex.

It is found in the nucleus. In terms of biological role, component of the Mediator complex, a coactivator involved in the regulated transcription of nearly all RNA polymerase II-dependent genes. Mediator functions as a bridge to convey information from gene-specific regulatory proteins to the basal RNA polymerase II transcription machinery. Mediator is recruited to promoters by direct interactions with regulatory proteins and serves as a scaffold for the assembly of a functional preinitiation complex with RNA polymerase II and the general transcription factors. The sequence is that of Mediator of RNA polymerase II transcription subunit 14 (RGR1) from Eremothecium gossypii (strain ATCC 10895 / CBS 109.51 / FGSC 9923 / NRRL Y-1056) (Yeast).